The following is a 163-amino-acid chain: Large ribosomal subunit protein uL10 (163 aa).

Belongs to the universal ribosomal protein uL10 family. In terms of assembly, part of the ribosomal stalk of the 50S ribosomal subunit. The N-terminus interacts with L11 and the large rRNA to form the base of the stalk. The C-terminus forms an elongated spine to which L12 dimers bind in a sequential fashion forming a multimeric L10(L12)X complex.

Forms part of the ribosomal stalk, playing a central role in the interaction of the ribosome with GTP-bound translation factors. The sequence is that of Large ribosomal subunit protein uL10 (rplJ) from Pasteurella multocida (strain Pm70).